A 382-amino-acid chain; its full sequence is Dual-specificity RNA methyltransferase RlmN (382 aa).

The active-site Proton acceptor is the Glu-91. Positions 97–339 (ETDRGTLCIS…TTVRKTRGDD (243 aa)) constitute a Radical SAM core domain. Cys-104 and Cys-344 are disulfide-bonded. The [4Fe-4S] cluster site is built by Cys-111, Cys-115, and Cys-118. S-adenosyl-L-methionine contacts are provided by residues 165–166 (GE), Ser-197, 219–221 (SLH), and Asn-301. Cys-344 (S-methylcysteine intermediate) is an active-site residue.

This sequence belongs to the radical SAM superfamily. RlmN family. The cofactor is [4Fe-4S] cluster.

Its subcellular location is the cytoplasm. It carries out the reaction adenosine(2503) in 23S rRNA + 2 reduced [2Fe-2S]-[ferredoxin] + 2 S-adenosyl-L-methionine = 2-methyladenosine(2503) in 23S rRNA + 5'-deoxyadenosine + L-methionine + 2 oxidized [2Fe-2S]-[ferredoxin] + S-adenosyl-L-homocysteine. It catalyses the reaction adenosine(37) in tRNA + 2 reduced [2Fe-2S]-[ferredoxin] + 2 S-adenosyl-L-methionine = 2-methyladenosine(37) in tRNA + 5'-deoxyadenosine + L-methionine + 2 oxidized [2Fe-2S]-[ferredoxin] + S-adenosyl-L-homocysteine. Functionally, specifically methylates position 2 of adenine 2503 in 23S rRNA and position 2 of adenine 37 in tRNAs. m2A2503 modification seems to play a crucial role in the proofreading step occurring at the peptidyl transferase center and thus would serve to optimize ribosomal fidelity. The protein is Dual-specificity RNA methyltransferase RlmN of Polaromonas naphthalenivorans (strain CJ2).